Consider the following 426-residue polypeptide: Glutamate-1-semialdehyde 2,1-aminomutase (426 aa).

K265 is modified (N6-(pyridoxal phosphate)lysine).

It belongs to the class-III pyridoxal-phosphate-dependent aminotransferase family. HemL subfamily. Homodimer. Pyridoxal 5'-phosphate is required as a cofactor.

Its subcellular location is the cytoplasm. The catalysed reaction is (S)-4-amino-5-oxopentanoate = 5-aminolevulinate. Its pathway is porphyrin-containing compound metabolism; protoporphyrin-IX biosynthesis; 5-aminolevulinate from L-glutamyl-tRNA(Glu): step 2/2. The polypeptide is Glutamate-1-semialdehyde 2,1-aminomutase (Pectobacterium atrosepticum (strain SCRI 1043 / ATCC BAA-672) (Erwinia carotovora subsp. atroseptica)).